The sequence spans 250 residues: Agamous-like MADS-box protein AGL8 homolog (250 aa).

In terms of domain architecture, MADS-box spans R3 to Y57. The K-box domain occupies P88–E178. 2 disordered regions span residues Q162–E191 and P206–P241. Over residues K171–E180 the composition is skewed to basic and acidic residues. Composition is skewed to polar residues over residues Q181–E191 and G226–M240.

Its subcellular location is the nucleus. Probable transcription factor. The protein is Agamous-like MADS-box protein AGL8 homolog (SCM1) of Solanum commersonii (Commerson's wild potato).